The following is a 187-amino-acid chain: Early nodulin-55-2 (187 aa).

The signal sequence occupies residues 1 to 26; the sequence is MASCLPNASPFLVMLAMCLLISTSEA. In terms of domain architecture, Phytocyanin spans 27-132; the sequence is EKYVVGGSEK…GLKLAVLVIS (106 aa). 3 N-linked (GlcNAc...) asparagine glycosylation sites follow: Asn78, Asn116, and Asn134. Cysteines 85 and 120 form a disulfide. The segment at 138–167 is disordered; it reads KNLLSPSPSPSPPPSSLLSPSPSPLPNNQG. The span at 144–162 shows a compositional bias: pro residues; the sequence is SPSPSPPPSSLLSPSPSPL.

Belongs to the early nodulin-like (ENODL) family.

The protein localises to the symbiosome. The protein resides in the peribacteroid membrane. May act as a carbohydrate transporter. This chain is Early nodulin-55-2, found in Glycine max (Soybean).